A 52-amino-acid chain; its full sequence is Large ribosomal subunit protein bL32c (52 aa).

Belongs to the bacterial ribosomal protein bL32 family.

It localises to the plastid. The protein resides in the chloroplast. This chain is Large ribosomal subunit protein bL32c, found in Citrus sinensis (Sweet orange).